Consider the following 442-residue polypeptide: F-box/FBD/LRR-repeat protein At2g26030 (442 aa).

Residues 3-49 enclose the F-box domain; the sequence is CDRICELPDSLLTQVLSYLPTIDSVKTSVLSKRWEFLWLRVPVLDLK. 6 LRR repeats span residues 128-160, 162-187, 188-214, 234-260, 278-309, and 324-352; these read CNTL…HLED, WYYD…VLIR, PIDF…RLTF, YLNF…DIDS, KRDI…DRYS, and QAAV…ILDF. Residues 358-410 enclose the FBD domain; it reads PEQDGLTYVPQCLLSSLECVEIRELIMGEETGEKLVRYFLKNSVVLKKLILRL.

In Arabidopsis thaliana (Mouse-ear cress), this protein is F-box/FBD/LRR-repeat protein At2g26030.